We begin with the raw amino-acid sequence, 336 residues long: Ethanol acetyltransferase 1 (336 aa).

The transit peptide at 1–14 (MFPTRVLRSTLQKL) directs the protein to the mitochondrion. The AB hydrolase-1 domain maps to 44-296 (PIVFLHGIFG…VNSSHDILDQ (253 aa)). Catalysis depends on charge relay system residues serine 117, aspartate 141, and histidine 291.

Belongs to the AB hydrolase superfamily.

It localises to the mitochondrion. The catalysed reaction is ethanol + acetyl-CoA = ethyl acetate + CoA. It catalyses the reaction acetyl-CoA + H2O = acetate + CoA + H(+). It carries out the reaction ethyl acetate + H2O = ethanol + acetate + H(+). Its function is as follows. Alcohol acetyltransferase that catalyzes the synthesis of ethyl acetate from ethanol and acetyl-CoA. Can also function as a thioesterase by hydrolyzing acetyl-CoA in the absence of ethanol, as well as esterase hydrolyzing ethyl acetate. In Cyberlindnera jadinii (strain ATCC 18201 / CBS 1600 / BCRC 20928 / JCM 3617 / NBRC 0987 / NRRL Y-1542) (Torula yeast), this protein is Ethanol acetyltransferase 1 (EAT1).